The sequence spans 217 residues: MSNPFLKQVFNKDKTFRPKRKFEPGTQRFELHKKAQASLNAGLDLKLAVQLPAGEELNDWVAVHVVDFFNRVNLIYGTISDGCTERSCPIMSGGPKYEYRWQDENKFRRPTALSAPRYMDLLMDWIEVQINNEDVFPTNVGTPFPKNFLQVVKKILSRLFRVFVHVYIHHFDRIAQLGSEAHVNTCYKHFYYFVTEFGLIDTKELEPLKEMTARMCH.

The Zn(2+) site is built by Cys83, Cys88, His165, and His170.

Belongs to the MOB1/phocein family.

Its function is as follows. May regulate the activity of kinases. The protein is MOB kinase activator 3A (MOB3A) of Bos taurus (Bovine).